The chain runs to 106 residues: Halilectin 3, beta chain (106 aa).

Residue Asn-65 is glycosylated (N-linked (GlcNAc...) asparagine).

Probable heterotrimer consisting of an alpha chain and two beta chains. The alpha chain can probably have different glycosylation states. Glycosylated.

Lectin with affinity for N-acetyl-galactosamine, carragenan and glycoprotein porcine stomach mucin (PSM). Has metal-independent hemagglutinating activity towards erythrocytes from rabbit and human. Hemagglutinating activity is not inhibited by D-galactose, D-glucose, D-mannose, D-fucose, methyl-alpha-D-galactopyranoside, methyl-alpha-D-glucopyranoside, N-acetyl-glucosamine, N-acetyl-mannosamine, D-fructose, alpha-D-lactose, beta-D-lactose, D-lactulose, D-sucrose, fucoidan or glycoproteins thyroglobulin and ovalmucoid. The sequence is that of Halilectin 3, beta chain from Haliclona caerulea (Blue Caribbean sponge).